The following is a 601-amino-acid chain: Zinc finger protein 37 (601 aa).

Residues 1 to 70 (MATPEPAESD…VRANKNSSSS (70 aa)) enclose the KRAB domain. Position 3 is a phosphothreonine (Thr-3). Ser-9 bears the Phosphoserine mark. A compositionally biased stretch (polar residues) spans 30-43 (ETCSNPASMGNQDP). Positions 30-254 (ETCSNPASMG…SKSDKAPGSG (225 aa)) are disordered. A compositionally biased stretch (low complexity) spans 60-70 (SVRANKNSSSS). The span at 77-88 (TGTSAKVQQDGA) shows a compositional bias: polar residues. Basic and acidic residues-rich tracts occupy residues 115-136 (KSSE…PSEK), 164-174 (KKPDTANEYRK), and 183-238 (VNRD…EKRK). The C2H2-type 1 zinc-finger motif lies at 257 to 279 (YECNQCGKVLSHKQGLLDHQRTH). A C2H2-type 2; atypical zinc finger spans residues 285 to 303 (YECYECGIAFSQKSHLVVH). 10 C2H2-type zinc fingers span residues 314 to 337 (YECV…RISH), 343 to 365 (YKCN…IRSH), 371 to 393 (YECK…VRTH), 399 to 421 (YECN…MRIH), 427 to 449 (FECT…QRTH), 455 to 477 (YKCK…MRTH), 483 to 505 (FECN…QRVH), 511 to 533 (YECV…QRTH), 539 to 561 (FECY…QRSH), and 570 to 592 (YECV…MKTH).

Belongs to the krueppel C2H2-type zinc-finger protein family. As to expression, expressed in testes, brain, kidney, spleen, thymus, lung, and at low levels in liver.

The protein resides in the nucleus. Functionally, may be involved in transcriptional regulation. In Rattus norvegicus (Rat), this protein is Zinc finger protein 37 (Zfp37).